We begin with the raw amino-acid sequence, 106 residues long: Minor capsid protein VP2 (106 aa).

This sequence belongs to the vesivirus VP2 protein family. As to quaternary structure, homooligomer. The portal-like structure consists in 12 copies of VP2. Interacts with capsid protein VP1.

It localises to the virion. The protein localises to the host cytoplasm. Minor structural protein that forms a portal-like structure at a unique three-fold axis of symmetry, following binding to the host receptor. The virion attaches to feline junctional adhesion molecule A (F11R). Once attached, the virion is endocytosed. Acidification of the endosome induces conformational change of capsid protein thereby injecting virus genomic RNA into host cytoplasm. The channel formed by VP2 may allow the delivery of the viral genome through the host endosomal membrane. This Feline calicivirus (strain Japanese F4) (FCV) protein is Minor capsid protein VP2.